Consider the following 62-residue polypeptide: Large ribosomal subunit protein bL28 (62 aa).

The interval 1-26 is disordered; sequence MARKCYVTGKSPKSGNNRSHALNKTK. Over residues 11-20 the composition is skewed to polar residues; it reads SPKSGNNRSH.

It belongs to the bacterial ribosomal protein bL28 family.

This chain is Large ribosomal subunit protein bL28, found in Exiguobacterium sibiricum (strain DSM 17290 / CCUG 55495 / CIP 109462 / JCM 13490 / 255-15).